The following is a 635-amino-acid chain: Extracellular metalloproteinase MEP (635 aa).

The N-terminal stretch at 1–19 (MRAFLLASLASLPAVNVYA) is a signal peptide. The propeptide occupies 20–244 (HPTHNSRGLT…VHAVVDYAAE (225 aa)). 3 N-linked (GlcNAc...) asparagine glycosylation sites follow: asparagine 287, asparagine 302, and asparagine 336. Histidine 429 contributes to the Zn(2+) binding site. Glutamate 430 is an active-site residue. Position 433 (histidine 433) interacts with Zn(2+).

The protein belongs to the peptidase M36 family. The cofactor is Zn(2+).

It localises to the secreted. Its function is as follows. Secreted metalloproteinase that allows assimilation of proteinaceous substrates. This Leptosphaeria maculans (strain JN3 / isolate v23.1.3 / race Av1-4-5-6-7-8) (Blackleg fungus) protein is Extracellular metalloproteinase MEP (MEP).